Consider the following 182-residue polypeptide: Large ribosomal subunit protein bL19m (182 aa).

The transit peptide at 1-21 (MFNAKHFFNLGLGFQWLQKRG) directs the protein to the mitochondrion.

The protein belongs to the bacterial ribosomal protein bL19 family. In terms of assembly, component of the mitochondrial large ribosomal subunit (mt-LSU). Mature yeast 74S mitochondrial ribosomes consist of a small (37S) and a large (54S) subunit. The 37S small subunit contains a 15S ribosomal RNA (15S mt-rRNA) and at least 32 different proteins. The 54S large subunit contains a 21S rRNA (21S mt-rRNA) and at least 45 different proteins.

The protein localises to the mitochondrion. Functionally, component of the mitochondrial ribosome (mitoribosome), a dedicated translation machinery responsible for the synthesis of mitochondrial genome-encoded proteins, including at least some of the essential transmembrane subunits of the mitochondrial respiratory chain. The mitoribosomes are attached to the mitochondrial inner membrane and translation products are cotranslationally integrated into the membrane. bL19m is essential for respiration. This is Large ribosomal subunit protein bL19m (img1) from Schizosaccharomyces pombe (strain 972 / ATCC 24843) (Fission yeast).